A 211-amino-acid polypeptide reads, in one-letter code: Arginine exporter protein ArgO (211 aa).

6 helical membrane-spanning segments follow: residues 1 to 21, 37 to 57, 68 to 88, 111 to 131, 147 to 167, and 179 to 199; these read MISYYFQGFALGVAMILPLGP, LMIALLCALSDLVLISAGIFG, LLALVTWGGVAFLLWYGFGAL, IIATMLAVTWLNPHVYLDTFV, WFALGTISASFLWFFGLALLA, and AQRIINILVGVVMWLIAFQLA.

The protein belongs to the LysE/ArgO transporter (TC 2.A.75) family.

It is found in the cell inner membrane. The catalysed reaction is L-arginine(in) = L-arginine(out). In terms of biological role, involved in the export of arginine. Important to control the intracellular level of arginine and the correct balance between arginine and lysine. This Salmonella paratyphi A (strain ATCC 9150 / SARB42) protein is Arginine exporter protein ArgO.